Here is a 256-residue protein sequence, read N- to C-terminus: UPF0246 protein PG_1544 (256 aa).

The protein belongs to the UPF0246 family.

This Porphyromonas gingivalis (strain ATCC BAA-308 / W83) protein is UPF0246 protein PG_1544.